The sequence spans 333 residues: Fructose-1,6-bisphosphatase class 1 (333 aa).

Glutamate 92, aspartate 113, leucine 115, and aspartate 116 together coordinate Mg(2+). Substrate-binding positions include 116–119 (DGSS), asparagine 209, tyrosine 242, and lysine 272. Glutamate 278 lines the Mg(2+) pocket.

It belongs to the FBPase class 1 family. In terms of assembly, homotetramer. Requires Mg(2+) as cofactor.

It is found in the cytoplasm. The catalysed reaction is beta-D-fructose 1,6-bisphosphate + H2O = beta-D-fructose 6-phosphate + phosphate. The protein operates within carbohydrate biosynthesis; Calvin cycle. This is Fructose-1,6-bisphosphatase class 1 from Chlorobium phaeovibrioides (strain DSM 265 / 1930) (Prosthecochloris vibrioformis (strain DSM 265)).